The primary structure comprises 151 residues: UPF0178 protein RD1_0321 (151 aa).

Belongs to the UPF0178 family.

This Roseobacter denitrificans (strain ATCC 33942 / OCh 114) (Erythrobacter sp. (strain OCh 114)) protein is UPF0178 protein RD1_0321.